Here is a 155-residue protein sequence, read N- to C-terminus: uncharacterized protein (155 aa).

Belongs to the mimivirus L6/L7/L57 family.

This is an uncharacterized protein from Acanthamoeba polyphaga (Amoeba).